The primary structure comprises 1202 residues: Liprin-alpha-1 (1202 aa).

The disordered stretch occupies residues 1–33 (MMCEVMPTISEAEGPPGGGGGHGSGSPSQPDAD). The span at 15 to 24 (PPGGGGGHGS) shows a compositional bias: gly residues. A coiled-coil region spans residues 34–141 (SHFEQLMVSM…VSRHERSLRM (108 aa)). Residue serine 150 is modified to Phosphoserine. Residues 176 to 214 (EKVRERLRVALERCSLLEEELGATHKELMILKEQNNQKK) are a coiled coil. Disordered stretches follow at residues 224-245 (NHEQ…SLSH) and 426-446 (KNQE…HNKR). At threonine 230 the chain carries Phosphothreonine. A phosphoserine mark is found at serine 239, serine 242, and serine 244. Coiled coils occupy residues 249–521 (LAKV…GASL) and 623–669 (ADAH…SGSL). The residue at position 448 (serine 448) is a Phosphoserine. Basic and acidic residues predominate over residues 651–662 (ENTEQRAEEIES). Positions 651–855 (ENTEQRAEEI…SKLGGQAEKN (205 aa)) are disordered. 3 positions are modified to phosphoserine: serine 666, serine 668, and serine 693. Over residues 686–700 (ASSLASSSPPGSGRS) the composition is skewed to low complexity. Over residues 725-736 (SREEVRDDKTTI) the composition is skewed to basic and acidic residues. The residue at position 761 (threonine 761) is a Phosphothreonine. Positions 762-771 (VSHEDIRDIR) are enriched in basic and acidic residues. Serine 763 carries the phosphoserine modification. A compositionally biased stretch (polar residues) spans 832 to 841 (VSETDNSSQD). Residues 847-871 (KLGGQAEKNRKLQKKHELLEEARRQ) are a coiled coil. 3 consecutive SAM domains span residues 878-944 (WDGP…IMSL), 963-1027 (NHEW…LRRL), and 1051-1120 (WSND…LLVM). A coiled-coil region spans residues 1021 to 1050 (IMCLRRLNYDRKELERKREESQSEIKDVLV). Serine 1133 carries the phosphoserine modification. Threonine 1159 carries the post-translational modification Phosphothreonine. The tract at residues 1163–1202 (NFRVTSSMSSPSMQPKKMQMDGNVSGTQRLDSATVRTYSC) is disordered. Residues 1168–1179 (SSMSSPSMQPKK) are compositionally biased toward low complexity. Residues 1184-1202 (GNVSGTQRLDSATVRTYSC) show a composition bias toward polar residues.

The protein belongs to the liprin family. Liprin-alpha subfamily. Homodimer. Interacts with PTPRF (via D2 domain). Part of a cortical microtubule stabilization complex (CMSC) composed of KANK1, PPFIA1, PPFIBP1, ERC1/ELKS, PHLDB2/LL5beta, CLASPs, KIF21A and possibly additional interactors; within CMSCs KANK1 and PHLDB2/LL5beta seem to be the core components for recruiting microtubule-binding proteins KIF21A and CLASPs, whereas PPFIA1, PPFIBP1 and ERC1/ELKS serve as scaffolds for protein clustering. In terms of tissue distribution, ubiquitous.

It is found in the cytoplasm. Its subcellular location is the cell cortex. Its function is as follows. May regulate the disassembly of focal adhesions. May localize receptor-like tyrosine phosphatases type 2A at specific sites on the plasma membrane, possibly regulating their interaction with the extracellular environment and their association with substrates. In Homo sapiens (Human), this protein is Liprin-alpha-1 (PPFIA1).